Consider the following 284-residue polypeptide: 2-dehydro-3-deoxyphosphooctonate aldolase (284 aa).

This sequence belongs to the KdsA family.

It is found in the cytoplasm. The enzyme catalyses D-arabinose 5-phosphate + phosphoenolpyruvate + H2O = 3-deoxy-alpha-D-manno-2-octulosonate-8-phosphate + phosphate. The protein operates within carbohydrate biosynthesis; 3-deoxy-D-manno-octulosonate biosynthesis; 3-deoxy-D-manno-octulosonate from D-ribulose 5-phosphate: step 2/3. It participates in bacterial outer membrane biogenesis; lipopolysaccharide biosynthesis. This Pectobacterium atrosepticum (strain SCRI 1043 / ATCC BAA-672) (Erwinia carotovora subsp. atroseptica) protein is 2-dehydro-3-deoxyphosphooctonate aldolase.